The following is a 2528-amino-acid chain: Squalestatin tetraketide synthase clz2 (2528 aa).

The Ketosynthase family 3 (KS3) domain maps to 14–409; sequence TVPIAIVGMS…GANAHVILES (396 aa). Active-site for beta-ketoacyl synthase activity residues include cysteine 187, histidine 291, and histidine 331. The interval 420–457 is disordered; the sequence is VNGHHQKNGTTNGHKGANGTTNELNGTNGTANGHDITT. The segment covering 436–452 has biased composition (low complexity); that stretch reads ANGTTNELNGTNGTANG. A malonyl-CoA:ACP transacylase (MAT) domain region spans residues 538 to 856; it reads GAQWFAMGRE…PYLSCLLRGQ (319 aa). Residues 925–1063 are N-terminal hotdog fold; the sequence is HDLLGSLIPG…GRIAIELDTS (139 aa). Residues 925 to 1239 form the PKS/mFAS DH domain; it reads HDLLGSLIPG…NQSVGQIALQ (315 aa). The dehydratase (DH) domain stretch occupies residues 925–1239; that stretch reads HDLLGSLIPG…NQSVGQIALQ (315 aa). The active-site Proton acceptor; for dehydratase activity is the histidine 957. Residues 1083–1239 are C-terminal hotdog fold; that stretch reads TRSVDPSNLY…NQSVGQIALQ (157 aa). Residue aspartate 1148 is the Proton donor; for dehydratase activity of the active site. The interval 1390–1590 is methyltransferase (CMet) domain; the sequence is LYRYYTDAIK…GLDVELRDCD (201 aa). An enoyl reductase (ER) (ER) domain region spans residues 1817–2130; the sequence is GLIDTLQFSK…AGKHMGKIVI (314 aa). A ketoreductase (KR) domain region spans residues 2153–2331; the sequence is ASYLIVGGLG…AVSIDLGMVQ (179 aa). The interval 2408–2430 is disordered; it reads RARDAKEQSNSQGGGTDSKISPG. The 78-residue stretch at 2441-2518 folds into the Carrier domain; that stretch reads EAIDVVGRAI…ALATTVATKS (78 aa). Serine 2478 bears the O-(pantetheine 4'-phosphoryl)serine mark.

It functions in the pathway secondary metabolite biosynthesis. Highly reducing polyketide synthase (HR-PKS); part of the gene cluster that mediates the biosynthesis of squalestatin S1 (SQS1, also known as zaragozic acid A), a heavily oxidized fungal polyketide that offers potent cholesterol lowering activity by targeting squalene synthase (SS). SQS1 is composed of a 2,8-dioxobicyclic[3.2.1]octane-3,4,5-tricarboxyclic acid core that is connected to two lipophilic polyketide arms. These initial steps feature the priming of an unusual benzoic acid starter unit onto the highly reducing polyketide synthase clz14, followed by oxaloacetate extension and product release to generate a tricarboxylic acid containing product. The phenylalanine ammonia lyase (PAL) clz10 and the acyl-CoA ligase clz12 are involved in transforming phenylalanine into benzoyl-CoA. The citrate synthase-like protein clz17 is involved in connecting the C-alpha-carbons of the hexaketide chain and oxaloacetate to afford the tricarboxylic acid unit. The potential hydrolytic enzymes, clz11 and clz13, are in close proximity to pks2 and may participate in product release. On the other side, the tetraketide arm is synthesized by a the squalestatin tetraketide synthase clz2 and enzymatically esterified to the core in the last biosynthetic step, by the acetyltransferase clz6. The biosynthesis of the tetraketide must involve 3 rounds of chain extension. After the first and second rounds methyl-transfer occurs, and in all rounds of extension the ketoreductase and dehydratase are active. The enoyl reductase and C-MeT of clz2 are not active in the final round of extension. The acetyltransferase clz6 appears to have a broad substrate selectivity for its acyl CoA substrate, allowing the in vitro synthesis of novel squalestatins. The biosynthesis of SQS1 requires several oxidative steps likely performed by oxidoreductases clz3, clz15 and clz16. Finally, in support of the identification of the cluster as being responsible for SQS1 production, the cluster contains a gene encoding a putative squalene synthase (SS) clz20, suggesting a likely mechanism for self-resistance. The sequence is that of Squalestatin tetraketide synthase clz2 from Cochliobolus lunatus (Filamentous fungus).